A 589-amino-acid polypeptide reads, in one-letter code: MWVLMSWLAFAAGLVAGTQCPDGQFCPVACCLDQGGANYSCCNPLLDTWPRITSHHLDGSCQTHGHCPAGYSCLLTVSGTSSCCPFSKGVSCGDGYHCCPQGFHCSADGKSCFQMSDNPLGAVQCPGSQFECPDSATCCIMVDGSWGCCPMPQASCCEDRVHCCPHGASCDLVHTRCVSPTGTHTLLKKFPAQKTNRAVSLPFSVVCPDAKTQCPDDSTCCELPTGKYGCCPMPNAICCSDHLHCCPQDTVCDLIQSKCLSKNYTTDLLTKLPGYPVKEVKCDMEVSCPEGYTCCRLNTGAWGCCPFAKAVCCEDHIHCCPAGFQCHTEKGTCEMGILQVPWMKKVIAPLRLPDPQILKSDTPCDDFTRCPTNNTCCKLNSGDWGCCPIPEAVCCSDNQHCCPQGFTCLAQGYCQKGDTMVAGLEKIPARQTTPLQIGDIGCDQHTSCPVGQTCCPSLKGSWACCQLPHAVCCEDRQHCCPAGYTCNVKARTCEKDVDFIQPPVLLTLGPKVGNVECGEGHFCHDNQTCCKDSAGVWACCPYLKGVCCRDGRHCCPGGFHCSARGTKCLRKKIPRWDMFLRDPVPRPLL.

Residues 1-17 (MWVLMSWLAFAAGLVAG) form the signal peptide. A glycan (N-linked (GlcNAc...) asparagine) is linked at Asn38. 2 disulfide bridges follow: Cys125–Cys138 and Cys132–Cys148. N-linked (GlcNAc...) asparagine glycosylation is present at Asn263. 10 cysteine pairs are disulfide-bonded: Cys282-Cys294, Cys288-Cys304, Cys295-Cys312, Cys305-Cys319, Cys313-Cys326, Cys320-Cys333, Cys364-Cys376, Cys370-Cys386, Cys395-Cys408, and Cys402-Cys414. N-linked (GlcNAc...) asparagine glycosylation is present at Asn373. N-linked (GlcNAc...) asparagine glycosylation is present at Asn526.

The protein belongs to the granulin family. As to quaternary structure, progranulin is secreted as a homodimer. Interacts with SLPI; interaction protects progranulin from proteolysis. Interacts (via region corresponding to granulin-7 peptide) with CTSD; stabilizes CTSD and increases its proteolytic activity. Interacts (via region corresponding to granulin-7 peptide) with SORT1; this interaction mediates endocytosis and lysosome delivery of progranulin; interaction occurs at the neuronal cell surface in a stressed nervous system. Interacts with PSAP; facilitates lysosomal delivery of progranulin from the extracellular space and the biosynthetic pathway. Forms a complex with PSAP and M6PR; PSAP bridges the binding between progranulin and M6PR. Forms a complex with PSAP and SORT1; progranulin bridges the interaction between PSAP and SORT1; facilitates lysosomal targeting of PSAP via SORT1; interaction enhances PSAP uptake in primary cortical neurons. Interacts (via regions corresponding to granulin-2 and granulin-7 peptides) with GBA1; this interaction prevents aggregation of GBA1-SCARB2 complex via interaction with HSPA1A upon stress. Interacts (via region corresponding to granulin-7 peptide) with HSPA1A; mediates recruitment of HSPA1A to GBA1 and prevents GBA1 aggregation in response to stress. In terms of processing, N-glycosylated. Post-translationally, cleaved by ELANE; proteolysis is blocked by SLPI and is concentration- and time-dependent and induces CXCL8/IL-8 production; granulin-3 and granulin-4 are resistant to ELANE. Cleaved by CTSL in lysosome thus regulating the maturation and turnover of progranulin within the lysosome. Highly expressed at the wound site and diminishes away from the wound. Not expressed in fibroblasts and endothelial cells in intact skin. In adult brain, expressed primarily in neurons and in resting and reactive microglia. Expressed in both neurons and microglia. Highly expressed in activated microglia in response to injury. Expressed in macrophage.

It is found in the secreted. It localises to the lysosome. In terms of biological role, secreted protein that acts as a key regulator of lysosomal function and as a growth factor involved in inflammation, wound healing and cell proliferation. Regulates protein trafficking to lysosomes, and also the activity of lysosomal enzymes. Also facilitates the acidification of lysosomes, causing degradation of mature CTSD by CTSB. In addition, functions as a wound-related growth factor that acts directly on dermal fibroblasts and endothelial cells to promote division, migration and the formation of capillary-like tubule structures. Also promotes epithelial cell proliferation by blocking TNF-mediated neutrophil activation preventing release of oxidants and proteases. Moreover, modulates inflammation in neurons by preserving neurons survival, axonal outgrowth and neuronal integrity. Functionally, inhibits epithelial cell proliferation and induces epithelial cells to secrete IL-8. Stabilizes CTSD through interaction with CTSD leading to maintain its aspartic-type peptidase activity. The protein is Progranulin (Grn) of Mus musculus (Mouse).